Consider the following 427-residue polypeptide: MESLTLQPIARVDGAINLPGSKSVSNRALLLAALACGKTVLTNLLDSDDVRHMLNALSALGINYTLSADRTRCDITGNGGALRAPGALELFLGNAGTAMRPLAAALCLGQNEIVLTGEPRMKERPIGHLVDSLRQGGANIDYLEQENYPPLRLRGGFTGGDIEVDGSVSSQFLTALLMTAPLAPKDTIIRVKGELVSKPYIDITLNLMKTFGVEIANHHYQQFVVKGGQQYHSPGRYLVEGDASSASYFLAAGAIKGGTVKVTGIGRKSMQGDIRFADVLEKMGATITWGDDFIACTRGELHAIDMDMNHIPDAAMTIATTALFAKGTTTLRNIYNWRVKETDRLFAMATELRKVGAEVEEGHDYIRITPPAKLQHADIGTYNDHRMAMCFSLVALSDTPVTILDPKCTAKTFPDYFEQLARMSTPA.

Positions 22, 23, and 27 each coordinate 3-phosphoshikimate. Position 22 (lysine 22) interacts with phosphoenolpyruvate. Phosphoenolpyruvate-binding residues include glycine 96 and arginine 124. 7 residues coordinate 3-phosphoshikimate: serine 169, serine 170, glutamine 171, serine 197, aspartate 313, asparagine 336, and lysine 340. Glutamine 171 provides a ligand contact to phosphoenolpyruvate. Aspartate 313 functions as the Proton acceptor in the catalytic mechanism. Residues arginine 344, arginine 386, and lysine 411 each coordinate phosphoenolpyruvate.

Belongs to the EPSP synthase family. As to quaternary structure, monomer.

Its subcellular location is the cytoplasm. The catalysed reaction is 3-phosphoshikimate + phosphoenolpyruvate = 5-O-(1-carboxyvinyl)-3-phosphoshikimate + phosphate. It participates in metabolic intermediate biosynthesis; chorismate biosynthesis; chorismate from D-erythrose 4-phosphate and phosphoenolpyruvate: step 6/7. Functionally, catalyzes the transfer of the enolpyruvyl moiety of phosphoenolpyruvate (PEP) to the 5-hydroxyl of shikimate-3-phosphate (S3P) to produce enolpyruvyl shikimate-3-phosphate and inorganic phosphate. In Salmonella choleraesuis (strain SC-B67), this protein is 3-phosphoshikimate 1-carboxyvinyltransferase.